Consider the following 95-residue polypeptide: Large ribosomal subunit protein bL25 (95 aa).

This sequence belongs to the bacterial ribosomal protein bL25 family. Part of the 50S ribosomal subunit; part of the 5S rRNA/L5/L18/L25 subcomplex. Contacts the 5S rRNA. Binds to the 5S rRNA independently of L5 and L18.

This is one of the proteins that binds to the 5S RNA in the ribosome where it forms part of the central protuberance. In Shewanella piezotolerans (strain WP3 / JCM 13877), this protein is Large ribosomal subunit protein bL25.